We begin with the raw amino-acid sequence, 375 residues long: Succinyl-diaminopimelate desuccinylase (375 aa).

H66 is a Zn(2+) binding site. D68 is an active-site residue. D99 provides a ligand contact to Zn(2+). The Proton acceptor role is filled by E133. Positions 134, 162, and 348 each coordinate Zn(2+).

The protein belongs to the peptidase M20A family. DapE subfamily. Homodimer. The cofactor is Zn(2+). Co(2+) is required as a cofactor.

It carries out the reaction N-succinyl-(2S,6S)-2,6-diaminopimelate + H2O = (2S,6S)-2,6-diaminopimelate + succinate. It participates in amino-acid biosynthesis; L-lysine biosynthesis via DAP pathway; LL-2,6-diaminopimelate from (S)-tetrahydrodipicolinate (succinylase route): step 3/3. Functionally, catalyzes the hydrolysis of N-succinyl-L,L-diaminopimelic acid (SDAP), forming succinate and LL-2,6-diaminopimelate (DAP), an intermediate involved in the bacterial biosynthesis of lysine and meso-diaminopimelic acid, an essential component of bacterial cell walls. This Photorhabdus laumondii subsp. laumondii (strain DSM 15139 / CIP 105565 / TT01) (Photorhabdus luminescens subsp. laumondii) protein is Succinyl-diaminopimelate desuccinylase.